The primary structure comprises 219 residues: Transmembrane emp24 domain-containing protein 10 (219 aa).

Residues 1 to 31 (MSGLSGPPTRRGPFPLALLLLFLLGPSLVLA) form the signal peptide. A required for interaction with STX17 region spans residues 1–142 (MSGLSGPPTR…KNYEEIAKVE (142 aa)). At 32–185 (ISFHLPINSR…RDTNESTNTR (154 aa)) the chain is on the lumenal side. A GOLD domain is found at 41–193 (RKCLREEIHK…TRVLYFSIFS (153 aa)). A dimethylated arginine mark is found at arginine 171 and arginine 176. The N-linked (GlcNAc...) asparagine glycan is linked to asparagine 179. A helical membrane pass occupies residues 186-206 (VLYFSIFSMFCLIGLATWQVF). The segment at 204 to 219 (QVFYLRRFFKAKKLIE) is interaction with COPG1. Residues 207 to 219 (YLRRFFKAKKLIE) are Cytoplasmic-facing. An interaction with ARF1 and IL1B region spans residues 207–219 (YLRRFFKAKKLIE). The COPII vesicle coat-binding motif lies at 211–212 (FF). A COPI vesicle coat-binding motif is present at residues 211-219 (FFKAKKLIE).

The protein belongs to the EMP24/GP25L family. Predominantly dimeric and to a lesser extent monomeric in the ER. Monomer and dimer in ERGIC and cis-Golgi network. Forms homooligomer (via GOLD domain); the assembly is promoted by direct binding with leaderless cargos and may form a protein channel that facilitates cargo entry into the ERGIC. Forms heterooligomeric complexes with other members of the p24 family such as TMED2, TMED7 and TMED9. Interacts (via GOLD domain) with TMED2 (via GOLD domain); the complex is required for export of TMED10 from the ER to the cis-Golgi network; the complex is proposed to be involved in cis-Golgi network dynamics and / or biogenesis. Associates with the COPI vesicle coat subunits (coatomer). Tetramerization of the cytoplasmic domain at the Golgi membrane in vitro; the complex is proposed to interact with COPI coatomer and induce budding of the vesicles. Interacts with COPG1; the interaction involves TMED10 homodimer. Interacts with ARF1 (GDP-bound); the interaction probably involves a TMED10 oligomer. Interacts with SEC23A, SEC24B, SEC24C and SEC24D components of the coat protein complex II/COPII, indicative of an association of TMED10 with the COPII vesicle coat. Interacts with CD59. Interacts with MPPE1/PGAP5; the complex might recruit and sort GPI-anchored proteins to the ER-exit site, or the interaction might lead to recycling of PGAP5 between the ER and the Golgi. Interacts with F2LR1/PAR2. Interacts with KDELR2/ERD2; the interaction is disrupted by KDELR2 ligand. Found in a complex composed at least of SURF4, TMED2 and TMED10. Associates with the presenilin-dependent gamma-secretase complex. Interacts with STX17; the interaction is direct. Interacts with IL-1; the interaction is direct. Interacts with RAB21 (active GTP-bound form); the interaction is indirect and regulates TMED10 abundance and localization at the Golgi.

The protein resides in the endoplasmic reticulum membrane. Its subcellular location is the endoplasmic reticulum-Golgi intermediate compartment membrane. It localises to the golgi apparatus membrane. The protein localises to the golgi apparatus. It is found in the cis-Golgi network membrane. The protein resides in the trans-Golgi network membrane. Its subcellular location is the cytoplasmic vesicle. It localises to the secretory vesicle membrane. The protein localises to the cell membrane. It is found in the melanosome. Functionally, cargo receptor involved in protein vesicular trafficking and quality control in the endoplasmic reticulum (ER) and Golgi. The p24 protein family is a group of transmembrane proteins that bind coat protein complex I/COPI and coat protein complex II/COPII involved in vesicular trafficking between the membranes. Acts at the lumenal side for incorporation of secretory cargo molecules into transport vesicles and involved in vesicle coat formation at the cytoplasmic side. Mainly functions in the early secretory pathway and cycles between the ER, ER-Golgi intermediate compartment (ERGIC) and Golgi, mediating cargo transport through COPI and COPII-coated vesicles. In COPII vesicle-mediated anterograde transport, involved in the transport of GPI-anchored proteins by acting together with TMED2 as their cargo receptor; the function specifically implies SEC24C and SEC24D of the COPII vesicle coat and lipid raft-like microdomains of the ER. Recognizes GPI anchors structural remodeled in the ER by the GPI inositol-deacylase/PGAP1 and the metallophosphoesterase MPPE1/PGAP5. In COPI vesicle-mediated retrograde transport, involved in the biogenesis of COPI vesicles and vesicle coat recruitment. Involved in trafficking of amyloid beta A4 protein and soluble APP-beta release (independent from the modulation of gamma-secretase activity). Involved in the KDELR2-mediated retrograde transport of the toxin A subunit (CTX-A-K63)together with COPI and the COOH terminus of KDELR2. On Golgi membranes, acts as a primary receptor for ARF1-GDP, a GTP-binding protein involved in COPI-vesicle formation. Increases coatomer-dependent GTPase-activating activity of ARFGAP2 which mediates the hydrolysis of ARF1-bound GTP and therefore modulates protein trafficking from the Golgi apparatus. Involved in the exocytic trafficking of G protein-coupled receptors F2LR1/PAR2 (trypsin and tryspin-like enzyme receptor), OPRM1 (opioid receptor) and P2RY4 (UTD and UDP receptor) from the Golgi to the plasma membrane, thus contributing to receptor resensitization. In addition to its cargo receptor activity, may also act as a protein channel after oligomerization, facilitating the post-translational entry of leaderless cytoplasmic cargo into the ERGIC. Involved in the translocation into ERGIC, the vesicle entry and the secretion of leaderless cargos (lacking the secretion signal sequence), including the mature form of interleukin 1/IL-1 family members, the alpha-crystallin B chain HSPB5, the carbohydrate-binding proteins galectin-1/LGALS1 and galectin-3/LGALS3, the microtubule-associated protein Tau/MAPT, and the annexin A1/ANXA1; the translocation process is dependent on cargo protein unfolding and enhanced by chaperones HSP90AB1 and HSP90B1/GRP9. Could also associates with the presenilin-dependent gamma-secretase complex in order to regulate gamma-cleavages of the amyloid beta A4 protein to yield amyloid-beta 40/Abeta40. The sequence is that of Transmembrane emp24 domain-containing protein 10 (TMED10) from Pongo abelii (Sumatran orangutan).